A 346-amino-acid chain; its full sequence is NADH-ubiquinone oxidoreductase chain 2 (346 aa).

Helical transmembrane passes span 1–21 (MNPH…TITI), 25–45 (HWVL…PLIS), 60–80 (FLTQ…NAWA), 95–115 (CLLL…HFWF), 124–144 (LMTA…LLLM), 149–169 (LNPA…GWMG), 178–195 (ILAF…IILV), 200–219 (LALL…FMAL), 242–262 (ATLM…GFMP), 274–294 (EMTP…FFYL), and 326–346 (AILA…HAIV).

Belongs to the complex I subunit 2 family.

Its subcellular location is the mitochondrion inner membrane. The enzyme catalyses a ubiquinone + NADH + 5 H(+)(in) = a ubiquinol + NAD(+) + 4 H(+)(out). Its function is as follows. Core subunit of the mitochondrial membrane respiratory chain NADH dehydrogenase (Complex I) that is believed to belong to the minimal assembly required for catalysis. Complex I functions in the transfer of electrons from NADH to the respiratory chain. The immediate electron acceptor for the enzyme is believed to be ubiquinone. This is NADH-ubiquinone oxidoreductase chain 2 (MT-ND2) from Mareca americana (American wigeon).